The chain runs to 64 residues: Conotoxin Pu3.4 (64 aa).

The N-terminal stretch at 1–16 (LGVLLPICLLLFPLTA) is a signal peptide. A propeptide spanning residues 17-49 (LPLDGDQPADRPAERMQDDFITEQHPLFDPVKR) is cleaved from the precursor. 3 disulfide bridges follow: cysteine 50–cysteine 63, cysteine 51–cysteine 59, and cysteine 55–cysteine 62. 4-hydroxyproline is present on proline 61.

This sequence belongs to the conotoxin M superfamily. In terms of tissue distribution, expressed by the venom duct.

Its subcellular location is the secreted. This chain is Conotoxin Pu3.4, found in Conus pulicarius (Flea-bitten cone).